The chain runs to 103 residues: Large ribosomal subunit protein bL21 (103 aa).

This sequence belongs to the bacterial ribosomal protein bL21 family. Part of the 50S ribosomal subunit. Contacts protein L20.

Its function is as follows. This protein binds to 23S rRNA in the presence of protein L20. This Kocuria rhizophila (strain ATCC 9341 / DSM 348 / NBRC 103217 / DC2201) protein is Large ribosomal subunit protein bL21.